A 257-amino-acid chain; its full sequence is Imidazole glycerol phosphate synthase subunit HisF (257 aa).

Catalysis depends on residues Asp12 and Asp131.

This sequence belongs to the HisA/HisF family. Heterodimer of HisH and HisF.

The protein resides in the cytoplasm. It carries out the reaction 5-[(5-phospho-1-deoxy-D-ribulos-1-ylimino)methylamino]-1-(5-phospho-beta-D-ribosyl)imidazole-4-carboxamide + L-glutamine = D-erythro-1-(imidazol-4-yl)glycerol 3-phosphate + 5-amino-1-(5-phospho-beta-D-ribosyl)imidazole-4-carboxamide + L-glutamate + H(+). It participates in amino-acid biosynthesis; L-histidine biosynthesis; L-histidine from 5-phospho-alpha-D-ribose 1-diphosphate: step 5/9. Its function is as follows. IGPS catalyzes the conversion of PRFAR and glutamine to IGP, AICAR and glutamate. The HisF subunit catalyzes the cyclization activity that produces IGP and AICAR from PRFAR using the ammonia provided by the HisH subunit. This Burkholderia vietnamiensis (strain G4 / LMG 22486) (Burkholderia cepacia (strain R1808)) protein is Imidazole glycerol phosphate synthase subunit HisF.